A 501-amino-acid polypeptide reads, in one-letter code: Dipeptide and tripeptide permease A (501 aa).

Over 1-21 the chain is Cytoplasmic; sequence MSTANKKPTESVSLNAFKQPK. Residues 22-44 form a helical membrane-spanning segment; that stretch reads AFYLIFSIELWERFGYYGLQGIM. The Periplasmic portion of the chain corresponds to 45-59; sequence AVYLVKQLGMSEADS. Residues 60 to 80 form a helical membrane-spanning segment; that stretch reads ITLFSSFSALVYGLVAIGGWL. Topologically, residues 81 to 89 are cytoplasmic; the sequence is GDKILGTKR. The helical transmembrane segment at 90-110 threads the bilayer; it reads VIMLGAVVLAIGYALVAWSGH. Residue aspartate 111 is a topological domain, periplasmic. The helical transmembrane segment at 112–132 threads the bilayer; it reads AGIVYMGMAAIAVGNGLFKAN. Residues 133–153 are Cytoplasmic-facing; sequence PSSLLSTCYAKDDPRLDGAFT. The chain crosses the membrane as a helical span at residues 154–174; it reads MYYMSVNIGSFFSMLATPWLA. Residues 175-178 are Periplasmic-facing; it reads ARYG. The chain crosses the membrane as a helical span at residues 179–199; it reads WSTAFALSVVGMLITVVNFAF. The Cytoplasmic segment spans residues 200 to 219; that stretch reads CQRWVKSYGSKPDFEPINFR. A helical transmembrane segment spans residues 220–240; the sequence is NLLLTIVGIVVLIAVATWLLH. The Periplasmic portion of the chain corresponds to 241-246; the sequence is NQDIAR. The chain crosses the membrane as a helical span at residues 247–267; the sequence is MVLGVIALGIVIIFGKEAFSM. Residues 268–274 lie on the Cytoplasmic side of the membrane; the sequence is HGAARRK. Residues 275 to 295 form a helical membrane-spanning segment; sequence MIVAFILMLQAIIFFVLYSQM. At 296 to 320 the chain is on the periplasmic side; that stretch reads PTSLNFFAIRNVEHSILGIAFEPEQ. The chain crosses the membrane as a helical span at residues 321-341; that stretch reads YQALNPFWIITGSPILAAIYN. The Cytoplasmic segment spans residues 342–352; that stretch reads RMGDTLPMPMK. Residues 353 to 373 form a helical membrane-spanning segment; that stretch reads FAIGMVLCSGAFLILPLGAKF. The Periplasmic portion of the chain corresponds to 374 to 383; that stretch reads ANDAGIVSVN. Residues 384–404 traverse the membrane as a helical segment; the sequence is WLIASYGLQSIGELMISGLGL. Residues 405–414 are Cytoplasmic-facing; that stretch reads AMVAQLVPQR. The helical transmembrane segment at 415 to 435 threads the bilayer; it reads LMGFIMGSWFLTTAGANIIGG. Over 436–459 the chain is Periplasmic; it reads YVANLMAVPSDVTDPLMSLEVYGR. The chain crosses the membrane as a helical span at residues 460 to 480; sequence VFMQIGIATAVIAVLMLLTAP. The Cytoplasmic segment spans residues 481–501; that stretch reads KLNRMTQDDDTAEKGSKAATV.

It belongs to the major facilitator superfamily. Proton-dependent oligopeptide transporter (POT/PTR) (TC 2.A.17) family. DtpA subfamily.

Its subcellular location is the cell inner membrane. In terms of biological role, proton-dependent permease that transports di- and tripeptides. The chain is Dipeptide and tripeptide permease A from Salmonella typhi.